A 527-amino-acid chain; its full sequence is GMP synthase [glutamine-hydrolyzing] (527 aa).

In terms of domain architecture, Glutamine amidotransferase type-1 spans 19–212 (KIIVLDYGSQ…AFSICGAKGD (194 aa)). The active-site Nucleophile is the Cys96. Residues His186 and Glu188 contribute to the active site. A GMPS ATP-PPase domain is found at 213–402 (WSMANFVDMQ…LGMPDEVVWR (190 aa)). 240 to 246 (SGGVDSS) serves as a coordination point for ATP.

Homodimer.

The catalysed reaction is XMP + L-glutamine + ATP + H2O = GMP + L-glutamate + AMP + diphosphate + 2 H(+). It functions in the pathway purine metabolism; GMP biosynthesis; GMP from XMP (L-Gln route): step 1/1. Functionally, catalyzes the synthesis of GMP from XMP. This is GMP synthase [glutamine-hydrolyzing] from Streptococcus thermophilus (strain ATCC BAA-250 / LMG 18311).